The following is a 284-amino-acid chain: uncharacterized protein (284 aa).

An N-terminal signal peptide occupies residues 1–24 (MLYSRESRTTVLFLALVTSLTVLC). At 25-84 (HSVDVTTVFTTSTITEITTVTAAPQPQNKAETALNTATNIIQTMQFLFNCAPFKWKGPLK) the chain is on the cytoplasmic side. The chain crosses the membrane as a helical span at residues 85 to 104 (ITSCALNFIVLLLTAWGYLL). The Extracellular portion of the chain corresponds to 105 to 284 (KYLQENKLNS…SVHMYSSSLL (180 aa)). A glycan (N-linked (GlcNAc...) asparagine) is linked at asparagine 270.

To yeast YNL019c.

It is found in the cell membrane. This is an uncharacterized protein from Saccharomyces cerevisiae (strain ATCC 204508 / S288c) (Baker's yeast).